Reading from the N-terminus, the 43-residue chain is uncharacterized protein (43 aa).

2 stretches are compositionally biased toward polar residues: residues 1–19 and 33–43; these read MSQKLSFFQQNTRNGSGAS and PENSISKTFSK. The disordered stretch occupies residues 1-43; it reads MSQKLSFFQQNTRNGSGASRTLVIKPPTIQPKPENSISKTFSK.

This is an uncharacterized protein from Dictyostelium discoideum (Social amoeba).